Consider the following 5478-residue polypeptide: Mucin-12 (5478 aa).

A signal peptide spans Met-1 to Ser-16. Residues Val-17 to Tyr-5380 are Extracellular-facing. Asn-154, Asn-170, and Asn-176 each carry an N-linked (GlcNAc...) asparagine glycan. Residues Leu-212 to Asp-737 form a disordered region. Residues Glu-222–Pro-240 form repeat 1. The tract at residues Glu-222–Pro-4761 is 28 X 19 AA approximate tandem repeats of E-E-S-X-X-X-H-X-X-P-X-X-T-X-T-X-X-X-P. 4 stretches are compositionally biased toward polar residues: residues Val-226 to Ser-246, Ser-255 to Arg-288, Pro-296 to Ser-313, and Asp-325 to Ile-342. Low complexity predominate over residues Pro-343–Thr-366. The segment covering Phe-367 to Gly-387 has biased composition (polar residues). Asn-382 carries N-linked (GlcNAc...) asparagine glycosylation. Over residues His-396–Thr-413 the composition is skewed to low complexity. A compositionally biased stretch (polar residues) spans Thr-419–Ala-440. Low complexity-rich tracts occupy residues Ser-445–Thr-466 and Ser-478–Ser-495. 2 tandem repeats follow at residues Glu-471 to Pro-489 and Glu-499 to Pro-517. Positions Thr-531–Ser-554 are enriched in low complexity. Polar residues-rich tracts occupy residues Tyr-555–Gly-575 and Ser-608–Thr-648. Low complexity predominate over residues Ser-654–Ser-669. Copy 4 of the repeat occupies Glu-662–Pro-680. 2 stretches are compositionally biased toward polar residues: residues Arg-670 to Ser-715 and Thr-722 to Asp-737. A glycan (N-linked (GlcNAc...) asparagine) is linked at Asn-738. 4 disordered regions span residues Met-749–Thr-4847, Ser-4887–Val-5034, Ser-5048–Asp-5071, and Ala-5093–Ser-5112. Polar residues-rich tracts occupy residues Val-751–Ser-783 and Thr-792–Met-842. Copy 5 of the repeat occupies Glu-827–Pro-845. Residues Thr-859–Ala-877 show a composition bias toward low complexity. Polar residues-rich tracts occupy residues Ser-884 to Asp-899 and Arg-928 to His-970. Residues Ser-971–Thr-1007 are compositionally biased toward low complexity. Residues Phe-1009 to His-1021 show a composition bias toward polar residues. Residues Ser-1022–Ser-1065 show a composition bias toward low complexity. Composition is skewed to polar residues over residues Pro-1066–Gly-1101 and Arg-1108–Gln-1138. Residues Thr-1139–Pro-1157 show a composition bias toward low complexity. Repeat 6 spans residues Glu-1159–Pro-1177. 2 stretches are compositionally biased toward polar residues: residues Glu-1160 to Gly-1184 and Ile-1191 to His-1207. 3 stretches are compositionally biased toward low complexity: residues Ser-1208–Arg-1220, Thr-1229–Ser-1241, and Ser-1249–Ser-1262. Polar residues-rich tracts occupy residues Glu-1271–Val-1324, Thr-1331–Ser-1357, and Pro-1364–Thr-1377. Composition is skewed to low complexity over residues Ser-1384 to Thr-1396 and Glu-1411 to Glu-1438. The span at Lys-1439–Arg-1448 shows a compositional bias: polar residues. Residues Thr-1458 to Thr-1481 show a composition bias toward low complexity. Repeat 7 spans residues Glu-1466–Pro-1484. Residues Phe-1483–Thr-1537 are compositionally biased toward polar residues. The segment covering Ser-1552–Pro-1568 has biased composition (low complexity). Polar residues-rich tracts occupy residues Ala-1569 to Trp-1586 and Val-1606 to Gly-1630. The stretch at Glu-1633 to Pro-1651 is repeat 8. Polar residues predominate over residues Arg-1653–Ala-1708. A compositionally biased stretch (low complexity) spans Ser-1709–Ser-1724. Residues Glu-1717–Pro-1735 form repeat 9. Composition is skewed to polar residues over residues Arg-1725–Ser-1797 and Pro-1805–Asp-1840. Residue Asn-1793 is glycosylated (N-linked (GlcNAc...) asparagine). 2 stretches are compositionally biased toward low complexity: residues Ser-1856–Thr-1877 and Ser-1889–Ser-1906. Repeat copies occupy residues Glu-1882–Pro-1900 and Glu-1910–Pro-1928. Polar residues predominate over residues Ala-1914–Gly-1935. Residues Ser-1943 to Ser-1959 show a composition bias toward low complexity. Polar residues-rich tracts occupy residues Ser-1967–Asp-1982 and Arg-2011–His-2053. Low complexity predominate over residues Ser-2054–Ser-2082. The stretch at Glu-2075–Pro-2093 is repeat 12. The span at Arg-2083–His-2104 shows a compositional bias: polar residues. The span at Ser-2105–Ser-2130 shows a compositional bias: low complexity. Polar residues-rich tracts occupy residues Gln-2131–Gly-2184 and Arg-2191–Gln-2221. A compositionally biased stretch (low complexity) spans Thr-2222–Pro-2240. Copy 13 of the repeat occupies Glu-2242–Pro-2260. Polar residues-rich tracts occupy residues Glu-2243–Gly-2267 and Ile-2274–His-2290. Composition is skewed to low complexity over residues Ser-2291–Arg-2303, Thr-2312–Ser-2324, and Ser-2332–Ser-2345. The segment covering Glu-2354–Gly-2392 has biased composition (polar residues). Low complexity predominate over residues Ser-2393–Val-2407. Composition is skewed to polar residues over residues Thr-2414–Ser-2440 and Pro-2447–Thr-2460. 2 stretches are compositionally biased toward low complexity: residues Ser-2467–Pro-2483 and Glu-2494–Glu-2521. Residues Lys-2522–Arg-2531 show a composition bias toward polar residues. A compositionally biased stretch (low complexity) spans Thr-2541–Thr-2564. Residues Glu-2549 to Pro-2567 form repeat 14. Polar residues predominate over residues Phe-2566–His-2578. The segment covering Ser-2579–Ser-2604 has biased composition (low complexity). Composition is skewed to polar residues over residues Gln-2605–Gly-2658 and Arg-2665–Gln-2695. Over residues Thr-2696–Pro-2714 the composition is skewed to low complexity. Copy 15 of the repeat occupies Glu-2716–Pro-2734. Polar residues-rich tracts occupy residues Glu-2717–Gly-2741 and Ile-2748–His-2764. 3 stretches are compositionally biased toward low complexity: residues Ser-2765 to Arg-2777, Thr-2786 to Ser-2798, and Ser-2806 to Ser-2819. Composition is skewed to polar residues over residues Glu-2828–Val-2881, Thr-2888–Ser-2914, and Pro-2921–Thr-2934. Composition is skewed to low complexity over residues Ser-2941–Pro-2957 and Glu-2968–Glu-2995. The span at Lys-2996 to Arg-3005 shows a compositional bias: polar residues. Positions Thr-3015–Thr-3038 are enriched in low complexity. Copy 16 of the repeat occupies Glu-3023 to Pro-3041. Positions Phe-3040–Thr-3094 are enriched in polar residues. Residues Ser-3109–Pro-3125 show a composition bias toward low complexity. Polar residues-rich tracts occupy residues Ala-3126–Trp-3143 and Val-3163–Gly-3187. The stretch at Glu-3190–Pro-3208 is repeat 17. Over residues Arg-3210 to Ala-3265 the composition is skewed to polar residues. Residues Ser-3266 to Ser-3281 show a composition bias toward low complexity. Repeat 18 spans residues Glu-3274 to Pro-3292. Composition is skewed to polar residues over residues Arg-3282–Ser-3354 and Pro-3362–Asp-3397. A glycan (N-linked (GlcNAc...) asparagine) is linked at Asn-3350. Composition is skewed to low complexity over residues Ser-3413–Thr-3434 and Ser-3446–Ser-3463. 2 repeat units span residues Glu-3439–Pro-3457 and Glu-3467–Pro-3485. Polar residues predominate over residues Glu-3468–Met-3482. Over residues Thr-3499–Ala-3517 the composition is skewed to low complexity. Polar residues-rich tracts occupy residues Ser-3524–Asp-3539 and Arg-3568–His-3610. The segment covering Ser-3611–Ser-3639 has biased composition (low complexity). Residues Glu-3632–Pro-3650 form repeat 21. Positions Arg-3640–His-3661 are enriched in polar residues. Positions Ser-3662 to Ser-3705 are enriched in low complexity. Polar residues-rich tracts occupy residues Pro-3706–Gly-3741 and Arg-3748–Gln-3778. Residues Thr-3779–Pro-3797 are compositionally biased toward low complexity. Repeat unit 22 spans residues Glu-3799–Pro-3817. Polar residues-rich tracts occupy residues Glu-3800 to Gly-3824 and Ile-3831 to His-3847. Composition is skewed to low complexity over residues Ser-3848–Arg-3860, Thr-3869–Ser-3881, and Ser-3889–Ser-3902. 3 stretches are compositionally biased toward polar residues: residues Glu-3911 to Ser-3963, Thr-3971 to Ser-3997, and Pro-4004 to Thr-4017. Composition is skewed to low complexity over residues Ser-4024 to Thr-4036 and Glu-4051 to Glu-4078. A compositionally biased stretch (polar residues) spans Lys-4079–Arg-4088. A compositionally biased stretch (low complexity) spans Thr-4098–Thr-4121. The stretch at Glu-4106–Pro-4124 is repeat 23. Polar residues predominate over residues Phe-4123–Thr-4177. The segment covering Ser-4192–Pro-4208 has biased composition (low complexity). The segment covering Ala-4209–Trp-4226 has biased composition (polar residues). A compositionally biased stretch (low complexity) spans Pro-4227–Thr-4249. Residues Tyr-4250–Gly-4270 show a composition bias toward polar residues. Residues Glu-4273 to Pro-4291 form repeat 24. The span at Arg-4293 to Ala-4348 shows a compositional bias: polar residues. Low complexity predominate over residues Ser-4349–Ser-4364. 2 stretches are compositionally biased toward polar residues: residues Met-4369–Ser-4437 and Pro-4445–Asp-4480. An N-linked (GlcNAc...) asparagine glycan is attached at Asn-4433. Low complexity-rich tracts occupy residues Ser-4496–Thr-4517 and Ser-4529–Ser-4546. 2 repeat units span residues Glu-4522–Pro-4540 and Glu-4550–Pro-4568. Residues Glu-4551 to Asn-4571 show a composition bias toward polar residues. N-linked (GlcNAc...) asparagine glycosylation is present at Asn-4571. Residues Thr-4582 to Ala-4600 show a composition bias toward low complexity. Polar residues-rich tracts occupy residues Ser-4607–Asp-4622 and Arg-4651–Lys-4688. 2 stretches are compositionally biased toward low complexity: residues Ser-4689–Thr-4710 and Ser-4722–Ser-4739. A run of 2 repeats spans residues Glu-4715–Pro-4733 and Glu-4743–Pro-4761. The segment covering Ala-4747–Gly-4768 has biased composition (polar residues). Residues Ser-4776–Ser-4792 are compositionally biased toward low complexity. Polar residues-rich tracts occupy residues Ser-4800–Pro-4814 and Ser-4887–Glu-4917. Over residues Ser-4918–Ser-4931 the composition is skewed to low complexity. Polar residues-rich tracts occupy residues Gly-4932–Phe-5024 and Ser-5048–Thr-5061. Residues Ser-5094–Ser-5112 show a composition bias toward low complexity. An EGF-like domain is found at Thr-5116–Leu-5154. Cys-5144 and Cys-5153 form a disulfide bridge. Residues Leu-5168 to Ser-5275 enclose the SEA domain. Asn-5169, Asn-5182, Asn-5197, Asn-5228, and Asn-5264 each carry an N-linked (GlcNAc...) asparagine glycan. The Cleavage motif motif lies at Leu-5226–Val-5233. A helical transmembrane segment spans residues Gly-5381–Phe-5401. Residues Ser-5402 to Val-5478 are Cytoplasmic-facing.

Ubiquitous, with higher expression in colon. Down-regulated in colorectal cancer as well as in the colon of patients with ulcerative colitis (UC) and Crohn's disease (CD).

It is found in the membrane. Functionally, involved in epithelial cell protection, adhesion modulation, and signaling. May be involved in epithelial cell growth regulation. Stimulated by both cytokine TNF-alpha and TGF-beta in intestinal epithelium. In Homo sapiens (Human), this protein is Mucin-12 (MUC12).